We begin with the raw amino-acid sequence, 892 residues long: Zinc finger protein 512B (892 aa).

The tract at residues 1–82 (MTDPFCVGGR…KKGRPKAENQ (82 aa)) is disordered. Positions 8-19 (GGRRLPGSSKSG) are enriched in low complexity. The segment at 105–129 (VKCPNSGCWLEFPSIYGLKYHYQRC) adopts a C2H2-type 1; atypical zinc-finger fold. Residues 140 to 163 (FPCPFCEAAFTSKTQLEKHRIWNH) form a C2H2-type 2 zinc finger. Disordered stretches follow at residues 323 to 473 (MVLL…RKKV) and 562 to 582 (EHSA…EERE). Positions 371–384 (SMGQSSAFQLSADT) are enriched in polar residues. The segment covering 385–398 (SSGSLSPGSRPSGG) has biased composition (low complexity). At S409 the chain carries Phosphoserine. Basic residues predominate over residues 418–428 (TKHRRKQKTPK). A NuRD interaction motif motif is present at residues 421–427 (RRKQKTP). A C2H2-type 3 zinc finger spans residues 540 to 563 (LKCQHCRKQFKSKAGLNYHTMAEH). A C2H2-type 4; atypical zinc finger spans residues 594–618 (LRCPQEGCGAAFSSLMGYQYHQRRC). Residues 630-653 (FPCTHCGKTYRSKAGHDYHVRSEH) form a C2H2-type 5 zinc finger. Residues 649 to 682 (VRSEHTAPPPEEPTDKSPEAEDPLGVERTPSGRV) are disordered. Residue S686 is modified to Phosphoserine. The C2H2-type 6; atypical zinc-finger motif lies at 750-774 (VNCPNDCCEAIYSSVSGLKAHLASC). The segment at 784-807 (YRCLLCPKEFSSESGVKYHILKTH) adopts a C2H2-type 7 zinc-finger fold. Positions 812–892 (FRTSADPPPK…KVGVSKAPEK (81 aa)) are disordered. Residues 819–831 (PPKHRSQDSLVPK) show a composition bias toward basic and acidic residues. Residues 832–849 (KEKKKNLAGGKKRGRKPK) are compositionally biased toward basic residues. Over residues 850-876 (ERTPEEPVAKLPPRRDDWPPGCRDKGA) the composition is skewed to basic and acidic residues.

This sequence belongs to the krueppel C2H2-type zinc-finger protein family. In terms of assembly, interacts (via its NuRD interaction motif) with RBBP4 of the nucleosome remodeling and deacetylase (NuRD) complex; the interaction is direct and may play a role in repressing gene expression.

Its subcellular location is the nucleus. Its function is as follows. Involved in transcriptional regulation by repressing gene expression. Associates with the nucleosome remodeling and histone deacetylase (NuRD) complex, which promotes transcriptional repression by histone deacetylation and nucleosome remodeling. The sequence is that of Zinc finger protein 512B (ZNF512B) from Homo sapiens (Human).